An 85-amino-acid chain; its full sequence is UPF0181 protein YPTS_1774 (85 aa).

Positions 57–72 are enriched in basic and acidic residues; it reads DHDFDEHTESDYRRDD. The disordered stretch occupies residues 57 to 85; sequence DHDFDEHTESDYRRDDEPDADDIEDLYEG. Positions 73-85 are enriched in acidic residues; sequence EPDADDIEDLYEG.

It belongs to the UPF0181 family.

This is UPF0181 protein YPTS_1774 from Yersinia pseudotuberculosis serotype IB (strain PB1/+).